Reading from the N-terminus, the 199-residue chain is Glycerol-3-phosphate acyltransferase (199 aa).

5 consecutive transmembrane segments (helical) span residues 4–24, 56–76, 80–100, 115–135, and 154–176; these read FALF…AILI, LAVL…GYYL, QFEL…PIFF, IAPI…FVFL, and YVWW…LIYR.

This sequence belongs to the PlsY family. Probably interacts with PlsX.

The protein resides in the cell inner membrane. It carries out the reaction an acyl phosphate + sn-glycerol 3-phosphate = a 1-acyl-sn-glycero-3-phosphate + phosphate. It functions in the pathway lipid metabolism; phospholipid metabolism. Its function is as follows. Catalyzes the transfer of an acyl group from acyl-phosphate (acyl-PO(4)) to glycerol-3-phosphate (G3P) to form lysophosphatidic acid (LPA). This enzyme utilizes acyl-phosphate as fatty acyl donor, but not acyl-CoA or acyl-ACP. The protein is Glycerol-3-phosphate acyltransferase of Haemophilus influenzae (strain PittGG).